We begin with the raw amino-acid sequence, 325 residues long: Oligopeptide transport system permease protein OppB (325 aa).

Helical transmembrane passes span Tyr12–Ser32, Leu102–Ile122, Leu135–Ala155, Leu189–Ser208, Ile248–Val268, and Thr290–Leu310. Positions Ile95–Ser311 constitute an ABC transmembrane type-1 domain.

It belongs to the binding-protein-dependent transport system permease family. OppBC subfamily. In terms of assembly, the complex is composed of an ATP-binding protein (OppD), two transmembrane proteins (OppB and OppC) and a solute-binding protein (OppA).

The protein localises to the cell inner membrane. Its function is as follows. Part of the ABC transporter complex OppABCD involved in the uptake of oligopeptides. Responsible for the translocation of the substrate across the membrane. This chain is Oligopeptide transport system permease protein OppB, found in Mycobacterium bovis (strain ATCC BAA-935 / AF2122/97).